The primary structure comprises 181 residues: Peptide deformylase (181 aa).

Fe cation contacts are provided by C99 and H141. Residue E142 is part of the active site. H145 lines the Fe cation pocket.

It belongs to the polypeptide deformylase family. Fe(2+) serves as cofactor.

It catalyses the reaction N-terminal N-formyl-L-methionyl-[peptide] + H2O = N-terminal L-methionyl-[peptide] + formate. Its function is as follows. Removes the formyl group from the N-terminal Met of newly synthesized proteins. Requires at least a dipeptide for an efficient rate of reaction. N-terminal L-methionine is a prerequisite for activity but the enzyme has broad specificity at other positions. This Chlamydia muridarum (strain MoPn / Nigg) protein is Peptide deformylase.